Reading from the N-terminus, the 151-residue chain is SsrA-binding protein (151 aa).

The tract at residues 121-151 (GKKLHDKRDTEKDREWQREKQRVMKNQRGAA) is disordered. Positions 126 to 142 (DKRDTEKDREWQREKQR) are enriched in basic and acidic residues.

Belongs to the SmpB family.

It localises to the cytoplasm. Functionally, required for rescue of stalled ribosomes mediated by trans-translation. Binds to transfer-messenger RNA (tmRNA), required for stable association of tmRNA with ribosomes. tmRNA and SmpB together mimic tRNA shape, replacing the anticodon stem-loop with SmpB. tmRNA is encoded by the ssrA gene; the 2 termini fold to resemble tRNA(Ala) and it encodes a 'tag peptide', a short internal open reading frame. During trans-translation Ala-aminoacylated tmRNA acts like a tRNA, entering the A-site of stalled ribosomes, displacing the stalled mRNA. The ribosome then switches to translate the ORF on the tmRNA; the nascent peptide is terminated with the 'tag peptide' encoded by the tmRNA and targeted for degradation. The ribosome is freed to recommence translation, which seems to be the essential function of trans-translation. The polypeptide is SsrA-binding protein (Chromobacterium violaceum (strain ATCC 12472 / DSM 30191 / JCM 1249 / CCUG 213 / NBRC 12614 / NCIMB 9131 / NCTC 9757 / MK)).